The following is a 293-amino-acid chain: Sphingolipid C4-hydroxylase sur2 (293 aa).

A run of 3 helical transmembrane segments spans residues 18–38 (LVSP…LHYI), 68–88 (AVLF…MFEG), and 127–147 (FIVP…WQYF). Residues 136-270 (FAFFIIDSWQ…FTFWDHVLGT (135 aa)) enclose the Fatty acid hydroxylase domain.

This sequence belongs to the sterol desaturase family.

The protein resides in the endoplasmic reticulum membrane. Its pathway is membrane lipid metabolism; sphingolipid biosynthesis. Functionally, required for hydroxylation of C-4 in the sphingoid moiety of ceramide. Involved in the response to syringomycin. In Schizosaccharomyces pombe (strain 972 / ATCC 24843) (Fission yeast), this protein is Sphingolipid C4-hydroxylase sur2 (sur2).